Here is a 375-residue protein sequence, read N- to C-terminus: Proclotting enzyme (375 aa).

An N-terminal signal peptide occupies residues 1-21 (MLVNNVFSLLCFPLLMSVVRC). A propeptide spanning residues 22 to 27 (STLSRQ) is cleaved from the precursor. At glutamine 30 the chain carries Pyrrolidone carboxylic acid. In terms of domain architecture, Clip spans 39-84 (LCSNRFTEEGTCKNVLDCRILLQKNDYNLLKESICGFEGITPKVCC). Cystine bridges form between cysteine 40-cysteine 83, cysteine 50-cysteine 73, and cysteine 56-cysteine 84. The segment at 90–113 (VISSTQAPPETTTTERPPKQIPPN) is disordered. Disulfide bonds link cysteine 118-cysteine 248, cysteine 157-cysteine 173, cysteine 295-cysteine 311, and cysteine 322-cysteine 351. An N-linked (GlcNAc...) asparagine glycan is attached at asparagine 122. A Peptidase S1 domain is found at 128–375 (IIGGREAPIG…FLDWIAEHMV (248 aa)). The active-site Charge relay system is the histidine 172. Ca(2+) is bound by residues glutamate 194, asparagine 196, serine 199, and aspartate 202. Catalysis depends on aspartate 228, which acts as the Charge relay system. Asparagine 235 and asparagine 304 each carry an N-linked (GlcNAc...) asparagine glycan. The Charge relay system role is filled by serine 326.

Belongs to the peptidase S1 family. CLIP subfamily. In the active form, heterodimer of a light chain and a heavy chain; disulfide-linked. Forms a covalent heterodimer with intracellular coagulation inhibitor 2/LICI-2. Proteolytically cleaved into its mature active form by serine protease factor B. Cleavage produces a 25 kDa light chain containing the CLIP domain and a catalytic 31 kDa heavy chain which remain covalently associated through an interchain disulfide bond. Proteolytically cleaved by clotting factor G subunit beta. In terms of processing, contains six O-linked carbohydrate chains in the N-terminal light chain. In terms of tissue distribution, expressed in hemocytes (at protein level).

It is found in the cytoplasmic vesicle. Its subcellular location is the secretory vesicle. The protein resides in the secreted. It carries out the reaction Selective cleavage of 18-Arg-|- and 47-Arg-|- bonds in coagulogen to form coagulin and fragments.. With respect to regulation, inhibited by intracellular coagulation inhibitor 2/LICI-2 and to a lesser extent by intracellular coagulation inhibitor 3/LICI-3. In terms of biological role, this enzyme is closely associated with an endotoxin-sensitive hemolymph coagulation system in limulus. Its active form catalyzes the conversion of coagulogen to insoluble coagulin gel. This chain is Proclotting enzyme, found in Tachypleus tridentatus (Japanese horseshoe crab).